We begin with the raw amino-acid sequence, 715 residues long: Transcription factor MST12 (715 aa).

Residues 214 to 224 (SSSFNAQQVSF) show a composition bias toward low complexity. 3 disordered regions span residues 214 to 243 (SSSFNAQQVSFPPSQSTSPVMRAMDSMPPP), 439 to 469 (AAHRPSDLRRSVSASVGPVAEGDESLDNSPP), and 518 to 539 (PMPSEDMTSPMDDRSRPMAQGG). C2H2-type zinc fingers lie at residues 564–588 (HSCPIPTCGRLFKRLEHLKRHVRTH) and 594–616 (YICPYCSKAFSRSDNLAQHKRTH). The interval 632-691 (EEEYSGDDHLGSLEEASPTSEGGYVTSSLNSAMAHSNTSQHPGSNAVSPNPGPMSHAPTY) is disordered. The span at 648–679 (SPTSEGGYVTSSLNSAMAHSNTSQHPGSNAVS) shows a compositional bias: polar residues.

It belongs to the STE12 transcription factor family.

It localises to the nucleus. Transcription factor that may function downstream of PMK1 to regulate genes involved in infectious hyphae growth. Is not essential for vegetative growth, conidiation or appressorium formation. May be involved in the regulation of the expression of the cell surface sensor MSB2. The polypeptide is Transcription factor MST12 (Pyricularia oryzae (strain 70-15 / ATCC MYA-4617 / FGSC 8958) (Rice blast fungus)).